A 99-amino-acid chain; its full sequence is Large ribosomal subunit protein bL27 (99 aa).

Residues 1–9 (MLIMNLQLF) constitute a propeptide that is removed on maturation.

The protein belongs to the bacterial ribosomal protein bL27 family. Post-translationally, the N-terminus is cleaved by ribosomal processing cysteine protease Prp.

This Clostridium botulinum (strain Alaska E43 / Type E3) protein is Large ribosomal subunit protein bL27.